Consider the following 197-residue polypeptide: Glycerol-3-phosphate acyltransferase (197 aa).

Helical transmembrane passes span 1–21 (MNILIIFASYLLGSLPTGFLI), 78–98 (LIEVIAGISAISGHIWPIWLG), 111–131 (MFLALSWKVGLASLGIFLIVL), 136–155 (FVSLSSISAAILLPIFMFFY), and 159–176 (FIHTYFFISLIVALLVIW).

Belongs to the PlsY family. As to quaternary structure, probably interacts with PlsX.

The protein localises to the cell inner membrane. It catalyses the reaction an acyl phosphate + sn-glycerol 3-phosphate = a 1-acyl-sn-glycero-3-phosphate + phosphate. It functions in the pathway lipid metabolism; phospholipid metabolism. Functionally, catalyzes the transfer of an acyl group from acyl-phosphate (acyl-PO(4)) to glycerol-3-phosphate (G3P) to form lysophosphatidic acid (LPA). This enzyme utilizes acyl-phosphate as fatty acyl donor, but not acyl-CoA or acyl-ACP. This Prochlorococcus marinus (strain MIT 9215) protein is Glycerol-3-phosphate acyltransferase.